An 88-amino-acid polypeptide reads, in one-letter code: Small ribosomal subunit protein bS18 (88 aa).

The tract at residues 1 to 26 is disordered; that stretch reads MAFAQSGGAGGGGGQRRPFFRRRKTC.

The protein belongs to the bacterial ribosomal protein bS18 family. As to quaternary structure, part of the 30S ribosomal subunit. Forms a tight heterodimer with protein bS6.

In terms of biological role, binds as a heterodimer with protein bS6 to the central domain of the 16S rRNA, where it helps stabilize the platform of the 30S subunit. This is Small ribosomal subunit protein bS18 from Xanthobacter autotrophicus (strain ATCC BAA-1158 / Py2).